The chain runs to 218 residues: MQTEQPPKESQTENTVSEPQEKALRTVFDDKINFNLKHPLARPWTLWFLMPPTPGLEWNELQKNIITFNSVEEFWGIHNNINPASSLPIKSDYSFFREGVRPEWEDVHNKTGGKWAFQNKGRGGNALDEMWLTTVLAAIGETLDPTGQEVMGVVINMRKGFYRLAVWTKSCNNREVLMEIGTRFKQVLNLPRSETIEFSAHEDSSKSGSTRAKTRMSV.

Residues 1–11 show a composition bias toward basic and acidic residues; it reads MQTEQPPKESQ. Disordered regions lie at residues 1-20 and 198-218; these read MQTE…SEPQ and FSAH…RMSV. The span at 206–218 shows a compositional bias: polar residues; that stretch reads KSGSTRAKTRMSV.

The protein belongs to the eukaryotic initiation factor 4E family. In terms of assembly, eIF4F is a multi-subunit complex, the composition of which varies with external and internal environmental conditions. It is composed of at least eIF4A, eIF4E and eIF4G. eIF4E is also known to interact with other partners.

Its function is as follows. Recognizes and binds the 7-methylguanosine-containing mRNA cap during an early step in the initiation of protein synthesis and facilitates ribosome binding by inducing the unwinding of the mRNAs secondary structures. This chain is Eukaryotic translation initiation factor 4E-1 (tif451), found in Schizosaccharomyces pombe (strain 972 / ATCC 24843) (Fission yeast).